The primary structure comprises 163 residues: Phosphopantetheine adenylyltransferase (163 aa).

Residue Thr10 participates in substrate binding. ATP is bound by residues 10–11 and His18; that span reads TF. Residues Lys42, Leu74, and Arg88 each contribute to the substrate site. ATP is bound by residues 89–91, Glu99, and 124–130; these read GLR and NSFISST.

This sequence belongs to the bacterial CoaD family. As to quaternary structure, homohexamer. Mg(2+) is required as a cofactor.

The protein localises to the cytoplasm. It catalyses the reaction (R)-4'-phosphopantetheine + ATP + H(+) = 3'-dephospho-CoA + diphosphate. It participates in cofactor biosynthesis; coenzyme A biosynthesis; CoA from (R)-pantothenate: step 4/5. In terms of biological role, reversibly transfers an adenylyl group from ATP to 4'-phosphopantetheine, yielding dephospho-CoA (dPCoA) and pyrophosphate. The polypeptide is Phosphopantetheine adenylyltransferase (Shewanella baltica (strain OS223)).